The chain runs to 95 residues: MSVDAATVRRIAHLARIAVDDAEVPHLQDELNAILAFVEQLQEVNVDGVEPMTSVTPMAMKMRTDVVNDGEIADRIVANAPVTHDHFFLVPKVVE.

It belongs to the GatC family. Heterotrimer of A, B and C subunits.

It catalyses the reaction L-glutamyl-tRNA(Gln) + L-glutamine + ATP + H2O = L-glutaminyl-tRNA(Gln) + L-glutamate + ADP + phosphate + H(+). The enzyme catalyses L-aspartyl-tRNA(Asn) + L-glutamine + ATP + H2O = L-asparaginyl-tRNA(Asn) + L-glutamate + ADP + phosphate + 2 H(+). In terms of biological role, allows the formation of correctly charged Asn-tRNA(Asn) or Gln-tRNA(Gln) through the transamidation of misacylated Asp-tRNA(Asn) or Glu-tRNA(Gln) in organisms which lack either or both of asparaginyl-tRNA or glutaminyl-tRNA synthetases. The reaction takes place in the presence of glutamine and ATP through an activated phospho-Asp-tRNA(Asn) or phospho-Glu-tRNA(Gln). In Nitrobacter winogradskyi (strain ATCC 25391 / DSM 10237 / CIP 104748 / NCIMB 11846 / Nb-255), this protein is Aspartyl/glutamyl-tRNA(Asn/Gln) amidotransferase subunit C.